Reading from the N-terminus, the 310-residue chain is DNA damage-repair/toleration protein DRT102 (310 aa).

A2 bears the N-acetylalanine mark. Positions 219–282 (IVRFKAGSVE…HRVKYHEDTE (64 aa)) constitute a Cupin type-2 domain.

This is DNA damage-repair/toleration protein DRT102 (DRT102) from Arabidopsis thaliana (Mouse-ear cress).